A 513-amino-acid chain; its full sequence is Cobyric acid synthase (513 aa).

Positions 252–457 (KIDIAVIRLP…LHGIFDEEGI (206 aa)) constitute a GATase cobBQ-type domain. The active-site Nucleophile is the C333. The active site involves H449.

The protein belongs to the CobB/CobQ family. CobQ subfamily.

It functions in the pathway cofactor biosynthesis; adenosylcobalamin biosynthesis. Its function is as follows. Catalyzes amidations at positions B, D, E, and G on adenosylcobyrinic A,C-diamide. NH(2) groups are provided by glutamine, and one molecule of ATP is hydrogenolyzed for each amidation. This Lachnoclostridium phytofermentans (strain ATCC 700394 / DSM 18823 / ISDg) (Clostridium phytofermentans) protein is Cobyric acid synthase.